The chain runs to 561 residues: Potassium-transporting ATPase potassium-binding subunit (561 aa).

12 helical membrane passes run 5-25 (LAAG…YVPV), 60-80 (YGYA…LYFL), 86-106 (VLPL…NTAI), 130-150 (VGLA…AIAL), 177-197 (ILLP…VIQS), 247-267 (PTPL…VCLT), 281-301 (LTLL…TLAA), 324-344 (FGIP…TGAV), 376-396 (GLYG…LLVG), 415-435 (ALSI…TVIL), 491-511 (ICML…AGAL), and 533-553 (GLLT…ALAL).

It belongs to the KdpA family. As to quaternary structure, the system is composed of three essential subunits: KdpA, KdpB and KdpC.

The protein localises to the cell membrane. Its function is as follows. Part of the high-affinity ATP-driven potassium transport (or Kdp) system, which catalyzes the hydrolysis of ATP coupled with the electrogenic transport of potassium into the cytoplasm. This subunit binds the extracellular potassium ions and delivers the ions to the membrane domain of KdpB through an intramembrane tunnel. The polypeptide is Potassium-transporting ATPase potassium-binding subunit (Rhodococcus erythropolis (strain PR4 / NBRC 100887)).